A 560-amino-acid chain; its full sequence is DNA ligase B (560 aa).

Catalysis depends on K124, which acts as the N6-AMP-lysine intermediate.

It belongs to the NAD-dependent DNA ligase family. LigB subfamily.

The catalysed reaction is NAD(+) + (deoxyribonucleotide)n-3'-hydroxyl + 5'-phospho-(deoxyribonucleotide)m = (deoxyribonucleotide)n+m + AMP + beta-nicotinamide D-nucleotide.. Its function is as follows. Catalyzes the formation of phosphodiester linkages between 5'-phosphoryl and 3'-hydroxyl groups in double-stranded DNA using NAD as a coenzyme and as the energy source for the reaction. The protein is DNA ligase B of Escherichia coli O7:K1 (strain IAI39 / ExPEC).